A 628-amino-acid chain; its full sequence is NUAK family SNF1-like kinase 2 (628 aa).

Met-1 carries the post-translational modification N-acetylmethionine. A Protein kinase domain is found at 53 to 303; sequence YEFLETLGKG…LEDVASHWWV (251 aa). ATP contacts are provided by residues 59–67 and Lys-81; that span reads LGKGTYGKV. Asp-175 (proton acceptor) is an active-site residue. Residue Thr-208 is modified to Phosphothreonine. 2 disordered regions span residues 355-492 and 522-570; these read KQHA…PQAS and GSLD…PLRG. Pro residues predominate over residues 428-444; it reads ELSPIPVSPGQAAPPLP. Residue Ser-435 is modified to Phosphoserine. The segment covering 457–469 has biased composition (low complexity); that stretch reads SGYYSSPEPSESG. Phosphoserine occurs at positions 523, 544, 547, and 573.

The protein belongs to the protein kinase superfamily. CAMK Ser/Thr protein kinase family. SNF1 subfamily. Requires Mg(2+) as cofactor. Phosphorylated at Thr-208 by STK11/LKB1 in complex with STE20-related adapter-alpha (STRADA) pseudo kinase and CAB39. Autophosphorylation is also possible at Thr-208.

It catalyses the reaction L-seryl-[protein] + ATP = O-phospho-L-seryl-[protein] + ADP + H(+). The catalysed reaction is L-threonyl-[protein] + ATP = O-phospho-L-threonyl-[protein] + ADP + H(+). With respect to regulation, activated by phosphorylation on Thr-208. Stress-activated kinase involved in tolerance to glucose starvation. Induces cell-cell detachment by increasing F-actin conversion to G-actin. Expression is induced by CD95 or TNF-alpha, via NF-kappa-B. Protects cells from CD95-mediated apoptosis and is required for the increased motility and invasiveness of CD95-activated tumor cells. Phosphorylates LATS1 and LATS2. Plays a key role in neural tube closure during embryonic development through LATS2 phosphorylation and regulation of the nuclear localization of YAP1 a critical downstream regulatory target in the Hippo signaling pathway. This chain is NUAK family SNF1-like kinase 2, found in Pongo abelii (Sumatran orangutan).